Reading from the N-terminus, the 65-residue chain is NADH dehydrogenase [ubiquinone] 1 alpha subcomplex subunit 1 (65 aa).

The helical transmembrane segment at 3–23 (LVWLEAMLPLGIIGGMLCIMG) threads the bilayer.

The protein belongs to the complex I NDUFA1 subunit family. In terms of assembly, complex I is composed of at least 49 different subunits.

The protein localises to the mitochondrion inner membrane. In terms of biological role, accessory subunit of the mitochondrial membrane respiratory chain NADH dehydrogenase (Complex I), that is believed not to be involved in catalysis. Complex I functions in the transfer of electrons from NADH to the respiratory chain. The immediate electron acceptor for the enzyme is believed to be ubiquinone. The polypeptide is NADH dehydrogenase [ubiquinone] 1 alpha subcomplex subunit 1 (Arabidopsis thaliana (Mouse-ear cress)).